The sequence spans 89 residues: Small ribosomal subunit protein uS15 (89 aa).

Belongs to the universal ribosomal protein uS15 family. As to quaternary structure, part of the 30S ribosomal subunit. Forms a bridge to the 50S subunit in the 70S ribosome, contacting the 23S rRNA.

In terms of biological role, one of the primary rRNA binding proteins, it binds directly to 16S rRNA where it helps nucleate assembly of the platform of the 30S subunit by binding and bridging several RNA helices of the 16S rRNA. Forms an intersubunit bridge (bridge B4) with the 23S rRNA of the 50S subunit in the ribosome. This is Small ribosomal subunit protein uS15 from Escherichia coli O157:H7.